The chain runs to 590 residues: Acyl-CoA ligase sidI (590 aa).

Residues 6 to 14 (RLQQTLSHL) carry the PTS2-type peroxisomal targeting signal motif. ATP contacts are provided by residues 220–228 (TSGSTGNPK), 359–364 (SSYGLT), Asp-449, and Arg-464. Thr-364 contributes to the substrate binding site. CoA contacts are provided by residues 472 to 474 (GGE) and 543 to 545 (YFF). Lys-563 lines the ATP pocket.

Belongs to the ATP-dependent AMP-binding enzyme family.

The protein localises to the peroxisome. The protein operates within siderophore biosynthesis. Its function is as follows. Acyl-CoA ligase; part of the siderophore biosynthetic pathway. Aspergillus fumigatus produces 4 types of siderophores, low-molecular-mass iron chelators, including excreted fusarinine C (FsC) and triacetylfusarinine C (TAFC) for iron uptake and intacellular ferricrocin (FC) for hyphal and hydroxyferricrocin (HFC) for conidial iron distribution and storage. TAFC consists of 3 N(2)-acetyl-N(5)-anhydromevalonyl-N(5)-hydroxyornithine residues cyclically linked by ester bonds; FC is a cyclic hexapeptide with the structure Gly-Ser-Gly-(N(5)-acetyl-N(5)-hydroxyornithine)x3. The biosynthesis of all four siderophores depends on the hydroxylation of ornithine, catalyzed by the monooxygenase sidA. Subsequently, the pathways for biosynthesis of extra- and intracellular siderophores split. For biosynthesis of extracellular siderophores, the transacylase sidF transfers anhydromevalonyl to N(5)-hydroxyornithine. The required anhydromevalonyl-CoA moiety is derived from mevalonate by CoA ligation and dehydration catalyzed by sidI and sidH respectively. The acetylation of N(5)-hydroxyornithine for FC biosynthesis involves the constitutively expressed sidL. FC is hydroxylated to HFC by an as yet uncharacterized enzyme during conidiation. Assembly of fusarinine C (FsC) and FC is catalyzed by two different nonribosomal peptide synthetases (NRPS), sidD and sidC respectively. Subsequently, sidG catalyzes N2-acetylation of FsC for forming TAFC. Both extra- and intracellular siderophores are crucial for growth during iron limitation and virulence. The polypeptide is Acyl-CoA ligase sidI (Aspergillus fumigatus (strain ATCC MYA-4609 / CBS 101355 / FGSC A1100 / Af293) (Neosartorya fumigata)).